Consider the following 158-residue polypeptide: 6,7-dimethyl-8-ribityllumazine synthase (158 aa).

Residues Phe23, 61-63, and 85-87 each bind 5-amino-6-(D-ribitylamino)uracil; these read SME and AVI. 90–91 is a binding site for (2S)-2-hydroxy-3-oxobutyl phosphate; that stretch reads DT. Residue His93 is the Proton donor of the active site. Residue Tyr118 coordinates 5-amino-6-(D-ribitylamino)uracil. (2S)-2-hydroxy-3-oxobutyl phosphate is bound at residue Arg132.

The protein belongs to the DMRL synthase family.

It catalyses the reaction (2S)-2-hydroxy-3-oxobutyl phosphate + 5-amino-6-(D-ribitylamino)uracil = 6,7-dimethyl-8-(1-D-ribityl)lumazine + phosphate + 2 H2O + H(+). Its pathway is cofactor biosynthesis; riboflavin biosynthesis; riboflavin from 2-hydroxy-3-oxobutyl phosphate and 5-amino-6-(D-ribitylamino)uracil: step 1/2. Functionally, catalyzes the formation of 6,7-dimethyl-8-ribityllumazine by condensation of 5-amino-6-(D-ribitylamino)uracil with 3,4-dihydroxy-2-butanone 4-phosphate. This is the penultimate step in the biosynthesis of riboflavin. In Prochlorococcus marinus (strain MIT 9211), this protein is 6,7-dimethyl-8-ribityllumazine synthase.